The chain runs to 456 residues: Exodeoxyribonuclease 7 large subunit (456 aa).

It belongs to the XseA family. As to quaternary structure, heterooligomer composed of large and small subunits.

It is found in the cytoplasm. It catalyses the reaction Exonucleolytic cleavage in either 5'- to 3'- or 3'- to 5'-direction to yield nucleoside 5'-phosphates.. In terms of biological role, bidirectionally degrades single-stranded DNA into large acid-insoluble oligonucleotides, which are then degraded further into small acid-soluble oligonucleotides. This Erwinia tasmaniensis (strain DSM 17950 / CFBP 7177 / CIP 109463 / NCPPB 4357 / Et1/99) protein is Exodeoxyribonuclease 7 large subunit.